The following is a 314-amino-acid chain: Olfactory receptor 5B3 (314 aa).

The Extracellular segment spans residues 1 to 23 (MENKTEVTQFILLGLTNDSELQV). N-linked (GlcNAc...) asparagine glycosylation is found at asparagine 3 and asparagine 17. The helical transmembrane segment at 24-44 (PLFITFPFIYIITLVGNLGII) threads the bilayer. At 45-52 (VLIFWDSC) the chain is on the cytoplasmic side. A helical transmembrane segment spans residues 53 to 73 (LHNPMYFFLSNLSLVDFCYSS). Topologically, residues 74 to 97 (AVTPIVMAGFLIEDKVISYNACAA) are extracellular. The cysteines at positions 95 and 187 are disulfide-linked. Residues 98–118 (QMYIFVAFATVENYLLASMAY) traverse the membrane as a helical segment. The Cytoplasmic portion of the chain corresponds to 119–131 (DRYAAVCKPLHYT). The helical transmembrane segment at 132–152 (TTMTTTVCARLAIGSYLCGFL) threads the bilayer. N-linked (GlcNAc...) asparagine glycosylation occurs at asparagine 153. The Extracellular segment spans residues 153–194 (NASIHTGDTFSLSFCKSNEVHHFFCDIPAVMVLSCSDRHISE). Residues 195 to 215 (LVLIYVVSFNIFIALLVILIS) form a helical membrane-spanning segment. Residues 216 to 235 (YTFIFITILKMHSASVYQKP) lie on the Cytoplasmic side of the membrane. The chain crosses the membrane as a helical span at residues 236–256 (LSTCASHFIAVGIFYGTIIFM). Residues 257–269 (YLQPSSSHSMDTD) lie on the Extracellular side of the membrane. The helical transmembrane segment at 270–290 (KMAPVFYTMVIPMLNPLVYSL) threads the bilayer. The Cytoplasmic portion of the chain corresponds to 291-314 (RNKEVKSAFKKVVEKAKLSVGWSV).

It belongs to the G-protein coupled receptor 1 family.

The protein resides in the cell membrane. Its function is as follows. Odorant receptor. The protein is Olfactory receptor 5B3 (OR5B3) of Homo sapiens (Human).